The sequence spans 904 residues: Toll-like receptor 3 (904 aa).

The N-terminal stretch at 1-26 (MSRPLPYHIYFFTGLLTCWILCTSSA) is a signal peptide. The LRRNT domain occupies 27–52 (HKCTVRHEVADCSHLKLTQIPEDLPT). Residues 27–705 (HKCTVRHEVA…PCKDSAPFEL (679 aa)) lie on the Lumenal side of the membrane. C29 and C38 form a disulfide bridge. N-linked (GlcNAc...) asparagine glycans are attached at residues N53, N58, and N71. 6 LRR repeats span residues 53–74 (NITV…NFTR), 77–98 (RLTI…LCQN), 101–122 (WLEI…TFVF), 125–146 (NLTE…PFKN), 149–170 (NLIK…TQLQ), and 173–196 (NLQE…DFLG). C96 and C123 form a disulfide bridge. An N-linked (GlcNAc...) asparagine glycan is attached at N125. N197 carries an N-linked (GlcNAc...) asparagine glycan. LRR repeat units follow at residues 199–220 (SLER…CFHA) and 223–245 (KLSG…LCLE). N-linked (GlcNAc...) asparagine glycans are attached at residues N248, N253, N276, and N292. 14 LRR repeats span residues 250–271 (SIEN…TFSG), 276–297 (NLTT…SFAW), 300–321 (HLEY…SFYG), 324–345 (NLRH…TSLP), 357–378 (CLEY…TFTG), 381–401 (RLKF…TNET), 409–430 (PLLL…AFSW), 433–455 (HLEV…EWRG), 466–487 (YNKY…QRLM), 508–529 (NLVI…LLKG), 532–553 (KLEI…ANPG), 564–585 (HLRI…AFKD), 588–609 (ELKS…VFDN), and 612–633 (SLKS…VFGP). Residues N399 and N414 are each glycosylated (N-linked (GlcNAc...) asparagine). N637, N663, and N668 each carry an N-linked (GlcNAc...) asparagine glycan. The region spanning 646–699 (NPFDCTCESIAWFVNWINSTHTNISELSNHYLCNTPPQYHGFPVMLFDVSPCKD) is the LRRCT domain. 2 cysteine pairs are disulfide-bonded: C650/C678 and C652/C697. A helical transmembrane segment spans residues 706–726 (LFMINTNILLIFIFIVLLIHF). At 727-904 (EGWRISFYWN…VALGSRNSAH (178 aa)) the chain is on the cytoplasmic side. One can recognise a TIR domain in the interval 754-897 (FEYAAYIIHA…AFHHKLKVAL (144 aa)). Phosphotyrosine is present on Y759. Residues K812 and K831 each participate in a glycyl lysine isopeptide (Lys-Gly) (interchain with G-Cter in ubiquitin) cross-link. At Y858 the chain carries Phosphotyrosine.

It belongs to the Toll-like receptor family. Monomer and homodimer; dimerization is triggered by ligand-binding and is required for TLR3 signaling. Interacts (via transmembrane domain) with UNC93B1. Interacts with TICAM1 (via the TIR domain) in response to poly(I:C) and this interaction is enhanced the presence of WDFY1. Interacts with SRC; upon binding of double-stranded RNA. The tyrosine-phosphorylated form (via TIR domain) interacts with WDFY1 (via WD repeat 2) in response to poly(I:C). In terms of processing, ubiquitinated by TRIM3; leading to recognition and sorting of polyubiquitinated TLR3 by the ESCRT complexes. Ubiquitinated by ZNRF1 via 'Lys-63'-linked ubiquitin chains; leading to TLR3 lysosomal trafficking and degradation.

The protein localises to the endoplasmic reticulum membrane. The protein resides in the endosome membrane. Its subcellular location is the early endosome. In terms of biological role, key component of innate and adaptive immunity. TLRs (Toll-like receptors) control host immune response against pathogens through recognition of molecular patterns specific to microorganisms. TLR3 is a nucleotide-sensing TLR which is activated by double-stranded RNA, a sign of viral infection. Acts via the adapter TRIF/TICAM1, leading to NF-kappa-B activation, cytokine secretion and the inflammatory response. This Boselaphus tragocamelus (Nilgai) protein is Toll-like receptor 3 (TLR3).